Reading from the N-terminus, the 761-residue chain is Dipeptidyl-peptidase 4 (761 aa).

The N-terminal stretch at 1-15 (MTLSAWIILVTLAMA) is a signal peptide. Active-site charge relay system residues include serine 622, aspartate 706, and histidine 738.

It belongs to the peptidase S9C family.

The protein resides in the membrane. In terms of biological role, may be involved in metabolism of dipeptides or may affect host defense mechanisms. This Giardia intestinalis (Giardia lamblia) protein is Dipeptidyl-peptidase 4 (DPP).